A 114-amino-acid polypeptide reads, in one-letter code: Nucleoid-associated protein Amet_4780 (114 aa).

Residues 23–42 (QKMQKDMEKTQAALEEKEVE) form a disordered region. Positions 25–42 (MQKDMEKTQAALEEKEVE) are enriched in basic and acidic residues.

Belongs to the YbaB/EbfC family. In terms of assembly, homodimer.

It localises to the cytoplasm. Its subcellular location is the nucleoid. Its function is as follows. Binds to DNA and alters its conformation. May be involved in regulation of gene expression, nucleoid organization and DNA protection. The polypeptide is Nucleoid-associated protein Amet_4780 (Alkaliphilus metalliredigens (strain QYMF)).